The chain runs to 491 residues: Ketol-acid reductoisomerase (NADP(+)) (491 aa).

The region spanning 15–208 (AQLGKCRFMG…GGHRAGVLES (194 aa)) is the KARI N-terminal Rossmann domain. NADP(+) is bound by residues 45 to 48 (CGAQ), R68, R76, S78, and 108 to 110 (DKQ). H132 is a catalytic residue. G158 provides a ligand contact to NADP(+). KARI C-terminal knotted domains lie at 209–344 (SFVA…TAPQ) and 345–484 (YEGK…MTDM). Residues D217, E221, E389, and E393 each contribute to the Mg(2+) site. S414 is a binding site for substrate.

It belongs to the ketol-acid reductoisomerase family. Requires Mg(2+) as cofactor.

It carries out the reaction (2R)-2,3-dihydroxy-3-methylbutanoate + NADP(+) = (2S)-2-acetolactate + NADPH + H(+). The catalysed reaction is (2R,3R)-2,3-dihydroxy-3-methylpentanoate + NADP(+) = (S)-2-ethyl-2-hydroxy-3-oxobutanoate + NADPH + H(+). Its pathway is amino-acid biosynthesis; L-isoleucine biosynthesis; L-isoleucine from 2-oxobutanoate: step 2/4. The protein operates within amino-acid biosynthesis; L-valine biosynthesis; L-valine from pyruvate: step 2/4. Its function is as follows. Involved in the biosynthesis of branched-chain amino acids (BCAA). Catalyzes an alkyl-migration followed by a ketol-acid reduction of (S)-2-acetolactate (S2AL) to yield (R)-2,3-dihydroxy-isovalerate. In the isomerase reaction, S2AL is rearranged via a Mg-dependent methyl migration to produce 3-hydroxy-3-methyl-2-ketobutyrate (HMKB). In the reductase reaction, this 2-ketoacid undergoes a metal-dependent reduction by NADPH to yield (R)-2,3-dihydroxy-isovalerate. The protein is Ketol-acid reductoisomerase (NADP(+)) of Escherichia coli (strain 55989 / EAEC).